The primary structure comprises 158 residues: Pathogenesis-related protein 1 (158 aa).

Belongs to the BetVI family.

Its subcellular location is the cytoplasm. The chain is Pathogenesis-related protein 1 (PR1) from Asparagus officinalis (Garden asparagus).